A 294-amino-acid polypeptide reads, in one-letter code: Acetyl-coenzyme A carboxylase carboxyl transferase subunit beta (294 aa).

Residues 25 to 294 (VWTKCTSCEQ…PLVVPVDGSH (270 aa)) form the CoA carboxyltransferase N-terminal domain. Zn(2+)-binding residues include Cys29, Cys32, Cys48, and Cys51. The C4-type zinc-finger motif lies at 29 to 51 (CTSCEQVLYSAELERNLEVCPKC).

It belongs to the AccD/PCCB family. As to quaternary structure, acetyl-CoA carboxylase is a heterohexamer composed of biotin carboxyl carrier protein (AccB), biotin carboxylase (AccC) and two subunits each of ACCase subunit alpha (AccA) and ACCase subunit beta (AccD). It depends on Zn(2+) as a cofactor.

It localises to the cytoplasm. It catalyses the reaction N(6)-carboxybiotinyl-L-lysyl-[protein] + acetyl-CoA = N(6)-biotinyl-L-lysyl-[protein] + malonyl-CoA. It participates in lipid metabolism; malonyl-CoA biosynthesis; malonyl-CoA from acetyl-CoA: step 1/1. Component of the acetyl coenzyme A carboxylase (ACC) complex. Biotin carboxylase (BC) catalyzes the carboxylation of biotin on its carrier protein (BCCP) and then the CO(2) group is transferred by the transcarboxylase to acetyl-CoA to form malonyl-CoA. In Aliivibrio fischeri (strain MJ11) (Vibrio fischeri), this protein is Acetyl-coenzyme A carboxylase carboxyl transferase subunit beta.